A 927-amino-acid polypeptide reads, in one-letter code: MKIKDTLNLGKTKFKMRGNLPVREAEWQKQWRENKLYEQRLKLNEGKPRFDLHDGPPFANGNIHMGHALNKISKDIIVRYKNMNGYYAPYVPGWDTHGLPVEQQLAKKGVDRKTMDRAKYRELCRQYAEEQVQKQMTDFKRLGVMADWDHPYITLQHDFEAQEIRVFGEMFKKGYIYKGKKPVYWSWSSESTLAEAEVEYKDVEANSIFVAFPVTDGKGIIDPKDTYFVIWTTTPWTIPANEAICVNPKFDYSVVQVGDKRYVVASGLLDKVAEEIGWDDYKVVQTVKGADMEYMKAKHPIYDKESLVIEGFHVTLDDGTGLVHTAPGFGEDDFNVGQRYNLPIFSPVDAHGCYTDEVPELKGMFYQDVDKLMVQKLKDAGALLKLKIFTHSYPHDWRTKKPVIFRATTQWFASIAPFRDQILDQIEKASFIPSWGKTRLYNMIKDRGDWVISRQRAWGVPLPIFYAEDGTPIVTPETIEHIAKIFEKEGSNAWYTHTAKELLPEGFTSEHSPNGEFTKEKDILDVWFDSGSSWSGVMEKRDGLHYPADLYLEGSDQYRGWFNSSLITSVAVTGQAPYKQVLSQGFVLDDKGHKMSKSLGNVISPNDVIKKMGAEIIRLWVAQADTTSDVAVSMGILQQSAESYRKIRNTFRYMLANTSDFDPKENRVAYDDLRSVDQYMEVKLNDLIKECLAAYDKFDFTTVFKKVFNFISNDLSAFYLDFAKDVLYIEVENSHARRSMQTVIYDAAVKLAKILTPILPHTMEEIWGFLKEDEDYVQLANMPEVENYANHDELLENWAKFMKLRDDVLKALEDARNKKLIGKSFEAAVTIYPDKETKAMLDELDADFREILIVSKLTISDDEAPVDAEQLANAAVVVKHAEGEVCPRCRMIRTDIGADPKLPMLCGRCAEIVEANYPEVVQEGLEK.

The 'HIGH' region signature appears at 57–67 (PFANGNIHMGH). Glu553 is a binding site for L-isoleucyl-5'-AMP. The 'KMSKS' region signature appears at 594–598 (KMSKS). Lys597 contributes to the ATP binding site. Residues Cys886, Cys889, Cys906, and Cys909 each contribute to the Zn(2+) site.

Belongs to the class-I aminoacyl-tRNA synthetase family. IleS type 1 subfamily. Monomer. Zn(2+) is required as a cofactor.

Its subcellular location is the cytoplasm. It catalyses the reaction tRNA(Ile) + L-isoleucine + ATP = L-isoleucyl-tRNA(Ile) + AMP + diphosphate. Its function is as follows. Catalyzes the attachment of isoleucine to tRNA(Ile). As IleRS can inadvertently accommodate and process structurally similar amino acids such as valine, to avoid such errors it has two additional distinct tRNA(Ile)-dependent editing activities. One activity is designated as 'pretransfer' editing and involves the hydrolysis of activated Val-AMP. The other activity is designated 'posttransfer' editing and involves deacylation of mischarged Val-tRNA(Ile). This chain is Isoleucine--tRNA ligase, found in Lactobacillus helveticus (strain DPC 4571).